The following is a 565-amino-acid chain: NAD-dependent malic enzyme (565 aa).

The Proton donor role is filled by Y104. Residue R157 coordinates NAD(+). K175 acts as the Proton acceptor in catalysis. A divalent metal cation is bound by residues E246, D247, and D270. The NAD(+) site is built by D270 and N418.

Belongs to the malic enzymes family. As to quaternary structure, homotetramer. Mg(2+) serves as cofactor. Mn(2+) is required as a cofactor.

It catalyses the reaction (S)-malate + NAD(+) = pyruvate + CO2 + NADH. It carries out the reaction oxaloacetate + H(+) = pyruvate + CO2. This is NAD-dependent malic enzyme from Shigella flexneri serotype 5b (strain 8401).